A 291-amino-acid polypeptide reads, in one-letter code: Ribosomal protein L11 methyltransferase (291 aa).

The S-adenosyl-L-methionine site is built by T136, G159, D181, and N228.

The protein belongs to the methyltransferase superfamily. PrmA family.

Its subcellular location is the cytoplasm. It catalyses the reaction L-lysyl-[protein] + 3 S-adenosyl-L-methionine = N(6),N(6),N(6)-trimethyl-L-lysyl-[protein] + 3 S-adenosyl-L-homocysteine + 3 H(+). Functionally, methylates ribosomal protein L11. The sequence is that of Ribosomal protein L11 methyltransferase from Rhizobium meliloti (strain 1021) (Ensifer meliloti).